Here is a 375-residue protein sequence, read N- to C-terminus: Queuine tRNA-ribosyltransferase (375 aa).

Aspartate 90 acts as the Proton acceptor in catalysis. Residues 90–94 (DSGGF), aspartate 144, glutamine 193, and glycine 220 contribute to the substrate site. The segment at 251 to 257 (GVGTPED) is RNA binding. The active-site Nucleophile is aspartate 270. The interval 275–279 (TRNAR) is RNA binding; important for wobble base 34 recognition. Residues cysteine 308, cysteine 310, cysteine 313, and histidine 339 each contribute to the Zn(2+) site.

Belongs to the queuine tRNA-ribosyltransferase family. As to quaternary structure, homodimer. Within each dimer, one monomer is responsible for RNA recognition and catalysis, while the other monomer binds to the replacement base PreQ1. Requires Zn(2+) as cofactor.

The enzyme catalyses 7-aminomethyl-7-carbaguanine + guanosine(34) in tRNA = 7-aminomethyl-7-carbaguanosine(34) in tRNA + guanine. It functions in the pathway tRNA modification; tRNA-queuosine biosynthesis. Catalyzes the base-exchange of a guanine (G) residue with the queuine precursor 7-aminomethyl-7-deazaguanine (PreQ1) at position 34 (anticodon wobble position) in tRNAs with GU(N) anticodons (tRNA-Asp, -Asn, -His and -Tyr). Catalysis occurs through a double-displacement mechanism. The nucleophile active site attacks the C1' of nucleotide 34 to detach the guanine base from the RNA, forming a covalent enzyme-RNA intermediate. The proton acceptor active site deprotonates the incoming PreQ1, allowing a nucleophilic attack on the C1' of the ribose to form the product. After dissociation, two additional enzymatic reactions on the tRNA convert PreQ1 to queuine (Q), resulting in the hypermodified nucleoside queuosine (7-(((4,5-cis-dihydroxy-2-cyclopenten-1-yl)amino)methyl)-7-deazaguanosine). The polypeptide is Queuine tRNA-ribosyltransferase (Herminiimonas arsenicoxydans).